The primary structure comprises 952 residues: Calsyntenin-1 (952 aa).

Residues 1–28 (MLRRPAPALARAVRLLLAGLLYGGGVWA) form the signal peptide. The Extracellular portion of the chain corresponds to 29–830 (ARVNKHKPWL…PHPFAVVPST (802 aa)). Cadherin domains follow at residues 38–154 (LEPT…APVF) and 155–255 (KEKS…SPGW). Asparagine 356 carries N-linked (GlcNAc...) asparagine glycosylation. The helical transmembrane segment at 831–851 (ATVVIVVCVSFLVFMIILGVF) threads the bilayer. Residues 852–952 (RIRAAHQRTM…LEWDYSTLSY (101 aa)) lie on the Cytoplasmic side of the membrane. Residues 886 to 952 (METYEDQHSS…LEWDYSTLSY (67 aa)) are disordered. The segment covering 896 to 930 (EEEEEEEEEEESEDGEEEEDITSAESESSEEEEGG) has biased composition (acidic residues). The segment covering 934-952 (GQNTTRQQQLEWDYSTLSY) has biased composition (polar residues).

Belongs to the calsyntenin family. In terms of assembly, directly interacts with APBA2. Forms a tripartite complex with APBA2 and APP. Interacts with KLC1. Interacts with APBB1; this interaction stabilizes AlcICD metabolism. As to quaternary structure, interacts with PSEN1. Proteolytically processed under normal cellular conditions. A primary zeta-cleavage generates a large extracellular (soluble) N-terminal domain (sAlc) and a short C-terminal transmembrane fragment (CTF1). A secondary cleavage catalyzed by presenilin gamma-secretase within the transmembrane domain releases the beta-Alc-alpha chain in the extracellular milieu and produces an intracellular fragment (AlcICD). This processing is strongly suppressed in the tripartite complex formed with APBA2 and APP, which seems to prevent the association with PSEN1. In terms of tissue distribution, preferentially expressed in the retina and brain.

It localises to the postsynaptic cell membrane. Its subcellular location is the endoplasmic reticulum membrane. It is found in the golgi apparatus membrane. The protein resides in the cell projection. The protein localises to the neuron projection. It localises to the nucleus. Postsynaptic adhesion molecule that binds to presynaptic neurexins to mediate both excitatory and inhibitory synapse formation. Promotes synapse development by acting as a cell adhesion molecule at the postsynaptic membrane, which associates with neurexin-alpha at the presynaptic membrane. Also functions as a cargo in axonal anterograde transport by acting as a molecular adapter that promotes KLC1 association with vesicles. Complex formation with APBA2 and APP, stabilizes APP metabolism and enhances APBA2-mediated suppression of beta-APP40 secretion, due to the retardation of intracellular APP maturation. In terms of biological role, as intracellular fragment AlcICD, suppresses APBB1-dependent transactivation stimulated by APP C-terminal intracellular fragment (AICD), most probably by competing with AICD for APBB1-binding. Its function is as follows. In complex with APBA2 and C99, a C-terminal APP fragment, abolishes C99 interaction with PSEN1 and thus APP C99 cleavage by gamma-secretase, most probably through stabilization of the direct interaction between APBA2 and APP. This Rattus norvegicus (Rat) protein is Calsyntenin-1 (Clstn1).